A 529-amino-acid polypeptide reads, in one-letter code: Cytochrome P450 monooxygenase 45 (529 aa).

A helical membrane pass occupies residues 24 to 44 (VLTICILALLTFVLREIVLYF). Asn-185 and Asn-322 each carry an N-linked (GlcNAc...) asparagine glycan. Position 454 (Cys-454) interacts with heme.

The protein belongs to the cytochrome P450 family. Heme is required as a cofactor.

Its subcellular location is the membrane. Its pathway is secondary metabolite biosynthesis. In terms of biological role, cytochrome P450 monooxygenase that is able to use trans-stilbene as a substrate for oxidation. The chain is Cytochrome P450 monooxygenase 45 from Postia placenta (strain ATCC 44394 / Madison 698-R) (Brown rot fungus).